Consider the following 122-residue polypeptide: Photosystem II extrinsic protein U (122 aa).

The signal sequence occupies residues 1-30 (MRWLLSILVRVVLVLCLCFAPLGIPVVARA).

Belongs to the PsbU family. PSII is composed of 1 copy each of membrane proteins PsbA, PsbB, PsbC, PsbD, PsbE, PsbF, PsbH, PsbI, PsbJ, PsbK, PsbL, PsbM, PsbT, PsbX, PsbY, PsbZ, Psb30/Ycf12, peripheral proteins PsbO, CyanoQ (PsbQ), PsbU, PsbV and a large number of cofactors. It forms dimeric complexes.

Its subcellular location is the cellular thylakoid membrane. One of the extrinsic, lumenal subunits of photosystem II (PSII). PSII is a light-driven water plastoquinone oxidoreductase, using light energy to abstract electrons from H(2)O, generating a proton gradient subsequently used for ATP formation. The extrinsic proteins stabilize the structure of photosystem II oxygen-evolving complex (OEC), the ion environment of oxygen evolution and protect the OEC against heat-induced inactivation. This chain is Photosystem II extrinsic protein U, found in Synechococcus sp. (strain JA-2-3B'a(2-13)) (Cyanobacteria bacterium Yellowstone B-Prime).